The following is a 320-amino-acid chain: ATP-dependent 6-phosphofructokinase (320 aa).

Glycine 11 is a binding site for ATP. ADP is bound at residue 21 to 25; it reads RAVTK. Residues 72–73 and 102–105 contribute to the ATP site; these read RF and GDGS. Aspartate 103 contacts Mg(2+). Residue 125 to 127 participates in substrate binding; it reads TID. Aspartate 127 (proton acceptor) is an active-site residue. An ADP-binding site is contributed by arginine 154. Residues arginine 162 and 169–171 each bind substrate; that span reads MGR. ADP-binding positions include 185–187 and 213–215; these read GAD and KDH. Substrate is bound by residues glutamate 222, arginine 243, and 249–252; that span reads HMQR.

Belongs to the phosphofructokinase type A (PFKA) family. ATP-dependent PFK group I subfamily. Prokaryotic clade 'B1' sub-subfamily. As to quaternary structure, homotetramer. It depends on Mg(2+) as a cofactor.

Its subcellular location is the cytoplasm. The catalysed reaction is beta-D-fructose 6-phosphate + ATP = beta-D-fructose 1,6-bisphosphate + ADP + H(+). Its pathway is carbohydrate degradation; glycolysis; D-glyceraldehyde 3-phosphate and glycerone phosphate from D-glucose: step 3/4. With respect to regulation, allosterically activated by ADP and other diphosphonucleosides, and allosterically inhibited by phosphoenolpyruvate. Its function is as follows. Catalyzes the phosphorylation of D-fructose 6-phosphate to fructose 1,6-bisphosphate by ATP, the first committing step of glycolysis. The sequence is that of ATP-dependent 6-phosphofructokinase from Lactobacillus acidophilus (strain ATCC 700396 / NCK56 / N2 / NCFM).